Reading from the N-terminus, the 307-residue chain is Nicotinamide/nicotinic acid mononucleotide adenylyltransferase 2 (307 aa).

NAD(+)-binding residues include Ser-16 and Phe-17. His-24 contributes to the ATP binding site. NAD(+) contacts are provided by Trp-92 and Thr-95. 2 S-palmitoyl cysteine lipidation sites follow: Cys-164 and Cys-165. Gly-200, Asp-202, Leu-212, Trp-213, and Arg-232 together coordinate NAD(+). Residue 271–274 (TKSR) coordinates ATP.

The protein belongs to the eukaryotic NMN adenylyltransferase family. In terms of assembly, monomer. The cofactor is Mg(2+). Post-translationally, degraded in response to injured neurite. Degradation is caused by polyubiquitination by MYCBP2 after recognition by FBXO45. In terms of processing, palmitoylated; palmitoylation is required for membrane association.

The protein resides in the golgi apparatus membrane. The protein localises to the cytoplasmic vesicle membrane. Its subcellular location is the cytoplasm. It is found in the cell projection. It localises to the axon. It carries out the reaction beta-nicotinamide D-ribonucleotide + ATP + H(+) = diphosphate + NAD(+). It catalyses the reaction nicotinate beta-D-ribonucleotide + ATP + H(+) = deamido-NAD(+) + diphosphate. It functions in the pathway cofactor biosynthesis; NAD(+) biosynthesis; NAD(+) from nicotinamide D-ribonucleotide: step 1/1. The protein operates within cofactor biosynthesis; NAD(+) biosynthesis; deamido-NAD(+) from nicotinate D-ribonucleotide: step 1/1. Inhibited by P1-(adenosine-5')-P3-(nicotinamide-riboside-5')-triphosphate (Np3AD) and P1-(adenosine-5')-P4-(nicotinamide-riboside-5')-tetraphosphate (Np4AD). Functionally, nicotinamide/nicotinate-nucleotide adenylyltransferase that acts as an axon maintenance factor. Axon survival factor required for the maintenance of healthy axons: acts by delaying Wallerian axon degeneration, an evolutionarily conserved process that drives the loss of damaged axons. Catalyzes the formation of NAD(+) from nicotinamide mononucleotide (NMN) and ATP. Can also use the deamidated form; nicotinic acid mononucleotide (NaMN) as substrate but with a lower efficiency. Cannot use triazofurin monophosphate (TrMP) as substrate. Also catalyzes the reverse reaction, i.e. the pyrophosphorolytic cleavage of NAD(+). For the pyrophosphorolytic activity prefers NAD(+), NADH and NaAD as substrates and degrades nicotinic acid adenine dinucleotide phosphate (NHD) less effectively. Fails to cleave phosphorylated dinucleotides NADP(+), NADPH and NaADP(+). Also acts as an activator of ADP-ribosylation by supporting the catalytic activity of PARP16 and promoting mono-ADP-ribosylation of ribosomes by PARP16. May be involved in the maintenance of axonal integrity. The polypeptide is Nicotinamide/nicotinic acid mononucleotide adenylyltransferase 2 (NMNAT2) (Bos taurus (Bovine)).